The following is a 343-amino-acid chain: MDENKNKALTAALAQIEKQYGKGSIMRLGDSDVAKDIQVVSTGSLSLDIALGVGGLPRGRIIEIYGPESSGKTTLTLQVIAEMQKLGGTAAFIDAEHALDPQYAQKIGVNVQELLISQPDNGEQALEITDMLVRSGSVDIVVIDSVAALTPRAEIEGEMGEPQMGLQARLMSQALRKLTANIKRTNTTVIFINQIRMKIGVMFGNPETTTGGNALKFYASVRLDIRRTGSIKRGEEIVGNETRVKVVKNKVAPPFKQADFAILYGEGISRESEIIELGVLHKLIEKAGAWYSYNGEKIGQGRDNVRDYLKEHKDLAHEIEQKIRAAVDLAETNNRTVPPSPSE.

Residue 66–73 (GPESSGKT) coordinates ATP.

It belongs to the RecA family.

The protein resides in the cytoplasm. Functionally, can catalyze the hydrolysis of ATP in the presence of single-stranded DNA, the ATP-dependent uptake of single-stranded DNA by duplex DNA, and the ATP-dependent hybridization of homologous single-stranded DNAs. It interacts with LexA causing its activation and leading to its autocatalytic cleavage. This Nitrosomonas eutropha (strain DSM 101675 / C91 / Nm57) protein is Protein RecA.